Reading from the N-terminus, the 307-residue chain is MWTGKKVDSARALIARGWGVSLVSRCLRVSRAQLHVILRRTDDWMDGRRSRHTDDTDVLLRIHHVIGELPTYGYRRVWALLRRQAELDGMPAINAKRVYRIMRQNALLLERKPAVPPSKRAHTGRVAVKESNQRWCSDGFEFCCDNGERLRVTFALDCCDREALHWAVTTGGFNSETVQDVMLGAVERRFGNDLPSSPVEWLTDNGSCYRANETRQFARMLGLEPKNTAVRSPESNGIAESFVKTIKRDYISIMPKPDGLTAAKNLAEAFEHYNEWHPHSALGYRSPREYLRQRACNGLSDNRCLEI.

The Integrase catalytic domain occupies 112–295; sequence KPAVPPSKRA…SPREYLRQRA (184 aa).

Involved in the transposition of the insertion sequence IS2. The sequence is that of Transposase InsD for insertion element IS2-9 from Escherichia coli (strain K12).